The following is a 153-amino-acid chain: ATP synthase subunit b' (153 aa).

A helical transmembrane segment spans residues 23–40 (LMAIQVVALTYILNSLFF).

Belongs to the ATPase B chain family. As to quaternary structure, F-type ATPases have 2 components, F(1) - the catalytic core - and F(0) - the membrane proton channel. F(1) has five subunits: alpha(3), beta(3), gamma(1), delta(1), epsilon(1). F(0) has four main subunits: a(1), b(1), b'(1) and c(10-14). The alpha and beta chains form an alternating ring which encloses part of the gamma chain. F(1) is attached to F(0) by a central stalk formed by the gamma and epsilon chains, while a peripheral stalk is formed by the delta, b and b' chains.

The protein resides in the cellular thylakoid membrane. F(1)F(0) ATP synthase produces ATP from ADP in the presence of a proton or sodium gradient. F-type ATPases consist of two structural domains, F(1) containing the extramembraneous catalytic core and F(0) containing the membrane proton channel, linked together by a central stalk and a peripheral stalk. During catalysis, ATP synthesis in the catalytic domain of F(1) is coupled via a rotary mechanism of the central stalk subunits to proton translocation. In terms of biological role, component of the F(0) channel, it forms part of the peripheral stalk, linking F(1) to F(0). The b'-subunit is a diverged and duplicated form of b found in plants and photosynthetic bacteria. The polypeptide is ATP synthase subunit b' (Prochlorococcus marinus (strain MIT 9312)).